A 299-amino-acid polypeptide reads, in one-letter code: Bifunctional protein FolD (299 aa).

NADP(+) is bound by residues 164–166 and Ile234; that span reads GRS.

This sequence belongs to the tetrahydrofolate dehydrogenase/cyclohydrolase family. Homodimer.

The enzyme catalyses (6R)-5,10-methylene-5,6,7,8-tetrahydrofolate + NADP(+) = (6R)-5,10-methenyltetrahydrofolate + NADPH. It carries out the reaction (6R)-5,10-methenyltetrahydrofolate + H2O = (6R)-10-formyltetrahydrofolate + H(+). It participates in one-carbon metabolism; tetrahydrofolate interconversion. Catalyzes the oxidation of 5,10-methylenetetrahydrofolate to 5,10-methenyltetrahydrofolate and then the hydrolysis of 5,10-methenyltetrahydrofolate to 10-formyltetrahydrofolate. The polypeptide is Bifunctional protein FolD (Christiangramia forsetii (strain DSM 17595 / CGMCC 1.15422 / KT0803) (Gramella forsetii)).